The sequence spans 1038 residues: Pentatricopeptide repeat-containing protein At5g27270 (1038 aa).

Over residues 23-38 (SRNSRISIKSSSSSSK) the composition is skewed to low complexity. The disordered stretch occupies residues 23 to 69 (SRNSRISIKSSSSSSKVRPDPWSLSDGNPEKPKPRYERPKHPLSDDD). Over residues 50–69 (NPEKPKPRYERPKHPLSDDD) the composition is skewed to basic and acidic residues. PPR repeat units lie at residues 187–221 (SVVV…GCEP), 222–256 (DAVA…RILL), 257–291 (STSV…GVPP), 292–326 (NEFT…GFVP), 327–361 (EEVT…GIVP), 362–396 (SNYT…KIPA), 397–431 (DEVI…NLLA), 432–466 (DEKT…DIPL), 467–501 (SRFA…GLPD), 502–535 (ASSC…QVHF), 536–570 (DIEL…ARVK), 601–631 (DVMA…MFKT), 634–668 (GSSA…GLRM), 669–699 (EEET…AGES), 703–737 (GKSV…GCDP), 738–772 (GAVT…NIEL), 773–807 (DTVG…GVPC), 808–842 (SIQT…GLYL), 843–877 (DEKI…GIKP), 878–912 (GTPS…GRCT), 913–947 (DLST…GIPL), 948–982 (SHSH…GISP), and 983–1017 (DSAC…SVED).

Belongs to the PPR family. P subfamily.

This Arabidopsis thaliana (Mouse-ear cress) protein is Pentatricopeptide repeat-containing protein At5g27270 (EMB976).